The primary structure comprises 333 residues: Transcription factor TGA2.2 (333 aa).

Residues M1 to L14 are compositionally biased toward polar residues. The disordered stretch occupies residues M1–Q48. The segment covering D37–Q48 has biased composition (basic and acidic residues). The 45-residue stretch at D47–K91 folds into the bZIP domain. Residues K49–K69 are basic motif. The leucine-zipper stretch occupies residues L75 to I89. One can recognise a DOG1 domain in the interval A114–R330.

It belongs to the bZIP family. As to quaternary structure, interacts with NPR1/NH1. Interacts with NPR3/NH3.

It localises to the nucleus. Its function is as follows. Transcriptional regulator involved in defense response. This is Transcription factor TGA2.2 from Oryza sativa subsp. japonica (Rice).